Consider the following 576-residue polypeptide: (E,E)-alpha-farnesene synthase (576 aa).

Residues arginine 289, aspartate 326, aspartate 330, arginine 468, and asparagine 471 each coordinate (2E,6E)-farnesyl diphosphate. Residues aspartate 326 and aspartate 330 each coordinate Mg(2+). Residues 326-330 (DDVYD) carry the DDXXD motif motif. The Mg(2+) site is built by asparagine 471, threonine 475, and glutamate 479. Residues aspartate 484 and serine 487 each coordinate K(+).

It belongs to the terpene synthase family. Tpsb subfamily. In terms of assembly, monomer. Mg(2+) serves as cofactor. Mn(2+) is required as a cofactor. It depends on K(+) as a cofactor.

It localises to the cytoplasm. The enzyme catalyses (2E,6E)-farnesyl diphosphate = (3E,6E)-alpha-farnesene + diphosphate. Functionally, sesquiterpene synthase catalyzing the production of (E,E)-alpha-farnesene, the predominant terpene produced during storage of fruits. Produces all six isomers (E,E)-alpha-farnesene, (Z,E)-alpha-farnesene, (E,Z)-alpha-farnesene, (Z,Z)-alpha-farnesene, (E)-beta-farnesene and (Z)-beta-farnesene from a mix of isomeric forms of the farnesyl diphosphate precursor. Able to convert geranyl diphosphate to the monoterpenes (E)-beta-ocimene, linalool and beta-myrcene. Also has a prenyltransferase activity producing alpha-farnesene directly from geranyl diphosphate and isoprenyl diphosphate. The chain is (E,E)-alpha-farnesene synthase (AFS1) from Malus domestica (Apple).